A 305-amino-acid polypeptide reads, in one-letter code: tRNA dimethylallyltransferase (305 aa).

Gly8 to Ser15 lines the ATP pocket. Thr10–Ser15 serves as a coordination point for substrate.

Belongs to the IPP transferase family. Monomer. Requires Mg(2+) as cofactor.

It carries out the reaction adenosine(37) in tRNA + dimethylallyl diphosphate = N(6)-dimethylallyladenosine(37) in tRNA + diphosphate. Its function is as follows. Catalyzes the transfer of a dimethylallyl group onto the adenine at position 37 in tRNAs that read codons beginning with uridine, leading to the formation of N6-(dimethylallyl)adenosine (i(6)A). This is tRNA dimethylallyltransferase from Mycobacterium sp. (strain KMS).